The following is a 414-amino-acid chain: Putative nickel insertion protein (414 aa).

The interval 70–91 is disordered; that stretch reads ATHHDHDHSQDQTHHHHADHAP.

This sequence belongs to the LarC family.

The protein is Putative nickel insertion protein of Picosynechococcus sp. (strain ATCC 27264 / PCC 7002 / PR-6) (Agmenellum quadruplicatum).